The following is a 95-amino-acid chain: Protein FAM240C (95 aa).

The segment at 68-95 is disordered; that stretch reads KMLQGPGRCPDRVPEATESLHTKDKKAA. The span at 76–95 shows a compositional bias: basic and acidic residues; sequence CPDRVPEATESLHTKDKKAA.

Belongs to the FAM240 family.

In Homo sapiens (Human), this protein is Protein FAM240C (FAM240C).